Reading from the N-terminus, the 62-residue chain is Conotoxin Lt5.5 (62 aa).

The signal sequence occupies residues 1–22 (MRCLQVFIIFLLLIPSPPSVDA). Positions 23–48 (QRKTKDDVPLASFHDNAKRTLKRLWN) are excised as a propeptide.

The protein belongs to the conotoxin T superfamily. Contains 2 disulfide bonds that can be either 'C1-C3, C2-C4' or 'C1-C4, C2-C3', since these disulfide connectivities have been observed for conotoxins with cysteine framework V (for examples, see AC P0DQQ7 and AC P81755). As to expression, expressed by the venom duct.

It localises to the secreted. This is Conotoxin Lt5.5 from Conus litteratus (Lettered cone).